Reading from the N-terminus, the 365-residue chain is 4-hydroxy-3-methylbut-2-en-1-yl diphosphate synthase (flavodoxin) (365 aa).

[4Fe-4S] cluster is bound by residues C265, C268, C300, and E307.

It belongs to the IspG family. Requires [4Fe-4S] cluster as cofactor.

It catalyses the reaction (2E)-4-hydroxy-3-methylbut-2-enyl diphosphate + oxidized [flavodoxin] + H2O + 2 H(+) = 2-C-methyl-D-erythritol 2,4-cyclic diphosphate + reduced [flavodoxin]. The protein operates within isoprenoid biosynthesis; isopentenyl diphosphate biosynthesis via DXP pathway; isopentenyl diphosphate from 1-deoxy-D-xylulose 5-phosphate: step 5/6. In terms of biological role, converts 2C-methyl-D-erythritol 2,4-cyclodiphosphate (ME-2,4cPP) into 1-hydroxy-2-methyl-2-(E)-butenyl 4-diphosphate. This is 4-hydroxy-3-methylbut-2-en-1-yl diphosphate synthase (flavodoxin) from Bacillus mycoides (strain KBAB4) (Bacillus weihenstephanensis).